The chain runs to 170 residues: Myosin regulatory light chain 2 (170 aa).

Positions 1–13 (MSKAAKKKSSKKR) are enriched in basic residues. The interval 1–22 (MSKAAKKKSSKKRSGSEAAQFD) is disordered. EF-hand domains follow at residues 24–59 (KTIQ…MGQI) and 93–128 (DPEA…KRGE). Ca(2+)-binding residues include aspartate 37, asparagine 39, aspartate 41, and aspartate 48.

As to quaternary structure, myosin is a hexamer of 2 heavy chains and 4 light chains (two regulatory light chains and two essential light chains).

The polypeptide is Myosin regulatory light chain 2 (mlc-2) (Caenorhabditis elegans).